We begin with the raw amino-acid sequence, 272 residues long: 3-methyl-2-oxobutanoate hydroxymethyltransferase (272 aa).

Mg(2+)-binding residues include aspartate 42 and aspartate 86. 3-methyl-2-oxobutanoate-binding positions include 42-43 (DS), aspartate 86, and lysine 116. Glutamate 118 is a Mg(2+) binding site. The active-site Proton acceptor is the glutamate 185.

This sequence belongs to the PanB family. As to quaternary structure, homodecamer; pentamer of dimers. Mg(2+) is required as a cofactor.

It is found in the cytoplasm. The enzyme catalyses 3-methyl-2-oxobutanoate + (6R)-5,10-methylene-5,6,7,8-tetrahydrofolate + H2O = 2-dehydropantoate + (6S)-5,6,7,8-tetrahydrofolate. It participates in cofactor biosynthesis; (R)-pantothenate biosynthesis; (R)-pantoate from 3-methyl-2-oxobutanoate: step 1/2. Functionally, catalyzes the reversible reaction in which hydroxymethyl group from 5,10-methylenetetrahydrofolate is transferred onto alpha-ketoisovalerate to form ketopantoate. This chain is 3-methyl-2-oxobutanoate hydroxymethyltransferase, found in Prochlorococcus marinus (strain MIT 9303).